The primary structure comprises 240 residues: MYLRRAVSKTLALPLRAPPNPAPLGKDASLRRMSSNRFPGSSGSNMIYYLVVGVTVSAGGYYAYKTVTSDQAKHTEHKTNLKEKTKAEIHPFQGEKENVAETEKASSEAPEELIVEAEVVDAEESPSATVVVIKEASACPGHVEAAPETTAVSAETGPEVTDAAARETTEVNPETTPEVTNAALDEAVTIDNDKDTTKNETSDEYAELEEENSPAESESSAGDDLQEEASVGSEAASAQG.

Topologically, residues M1 to G40 are cytoplasmic. The chain crosses the membrane as a helical; Anchor for type IV membrane protein span at residues S41 to A63. The Mitochondrial intermembrane portion of the chain corresponds to Y64–G240. The segment at R166–G240 is disordered. Over residues E170–N181 the composition is skewed to low complexity. Residues D191 to T201 show a composition bias toward basic and acidic residues. Acidic residues predominate over residues S202–S213. A compositionally biased stretch (low complexity) spans E228–G240.

In terms of assembly, interacts with RHOT1/Miro-1, TRAK1/OIP106 and TRAK2/GRIF1. Interacts with RHOT2/Miro-2. In terms of tissue distribution, expressed in the brain, adrenal gland and corneal endothelium (CE). Expressed in steroid-producing cells of the ovary and testis (at protein level). Expressed in steroid-producing cells of the ovary and testis. Weakly expressed in placenta. Expressed in corneal endothelial cells.

Its subcellular location is the mitochondrion. It is found in the mitochondrion outer membrane. It localises to the mitochondrion inner membrane. In terms of biological role, plays a role in the trafficking of mitochondria along microtubules. Regulates the kinesin-mediated axonal transport of mitochondria to nerve terminals along microtubules during hypoxia. Participates in the translocation of TRAK2/GRIF1 from the cytoplasm to the mitochondrion. Also plays a role in steroidogenesis through maintenance of mitochondrial abundance and morphology. Plays an inhibitory role during neocortex development by regulating mitochondrial morphology, distribution and motility in neocortical neurons. The polypeptide is Protein MGARP (MGARP) (Homo sapiens (Human)).